Reading from the N-terminus, the 112-residue chain is NADH-quinone oxidoreductase subunit K (112 aa).

Transmembrane regions (helical) follow at residues 14 to 34 (LEGY…GALI), 39 to 59 (VVVF…LVAF), and 76 to 96 (LIIA…LAIF).

It belongs to the complex I subunit 4L family. In terms of assembly, NDH-1 is composed of 14 different subunits. Subunits NuoA, H, J, K, L, M, N constitute the membrane sector of the complex.

The protein resides in the cell membrane. The catalysed reaction is a quinone + NADH + 5 H(+)(in) = a quinol + NAD(+) + 4 H(+)(out). NDH-1 shuttles electrons from NADH, via FMN and iron-sulfur (Fe-S) centers, to quinones in the respiratory chain. The immediate electron acceptor for the enzyme in this species is believed to be a menaquinone. Couples the redox reaction to proton translocation (for every two electrons transferred, four hydrogen ions are translocated across the cytoplasmic membrane), and thus conserves the redox energy in a proton gradient. The polypeptide is NADH-quinone oxidoreductase subunit K (Rubrobacter xylanophilus (strain DSM 9941 / JCM 11954 / NBRC 16129 / PRD-1)).